The chain runs to 203 residues: Large ribosomal subunit protein bL25 (203 aa).

Belongs to the bacterial ribosomal protein bL25 family. CTC subfamily. As to quaternary structure, part of the 50S ribosomal subunit; part of the 5S rRNA/L5/L18/L25 subcomplex. Contacts the 5S rRNA. Binds to the 5S rRNA independently of L5 and L18.

Its function is as follows. This is one of the proteins that binds to the 5S RNA in the ribosome where it forms part of the central protuberance. In Cereibacter sphaeroides (strain ATCC 17025 / ATH 2.4.3) (Rhodobacter sphaeroides), this protein is Large ribosomal subunit protein bL25.